The sequence spans 52 residues: U-scutigerotoxin(01)-Tl1a (52 aa).

A signal peptide spans 1 to 25 (MLAKAMSLLMMFLLVLVIGSVMVSA).

The protein belongs to the scutigerotoxin-01 family. In terms of processing, contains 1 disulfide bond. Expressed by the venom gland.

Its subcellular location is the secreted. The polypeptide is U-scutigerotoxin(01)-Tl1a (Thereuopoda longicornis (Long-legged centipede)).